A 166-amino-acid chain; its full sequence is Endoribonuclease YbeY (166 aa).

Positions 130, 134, and 140 each coordinate Zn(2+).

Belongs to the endoribonuclease YbeY family. Zn(2+) is required as a cofactor.

The protein localises to the cytoplasm. Functionally, single strand-specific metallo-endoribonuclease involved in late-stage 70S ribosome quality control and in maturation of the 3' terminus of the 16S rRNA. The chain is Endoribonuclease YbeY from Streptococcus uberis (strain ATCC BAA-854 / 0140J).